The following is a 365-amino-acid chain: tRNA N6-adenosine threonylcarbamoyltransferase (365 aa).

Residues His119 and His123 each coordinate Fe cation. Residues 141–145, Asp174, Gly187, and Asn288 contribute to the substrate site; that span reads LVSGG. Asp316 lines the Fe cation pocket.

Belongs to the KAE1 / TsaD family. Fe(2+) is required as a cofactor.

It localises to the cytoplasm. The enzyme catalyses L-threonylcarbamoyladenylate + adenosine(37) in tRNA = N(6)-L-threonylcarbamoyladenosine(37) in tRNA + AMP + H(+). Functionally, required for the formation of a threonylcarbamoyl group on adenosine at position 37 (t(6)A37) in tRNAs that read codons beginning with adenine. Is involved in the transfer of the threonylcarbamoyl moiety of threonylcarbamoyl-AMP (TC-AMP) to the N6 group of A37, together with TsaE and TsaB. TsaD likely plays a direct catalytic role in this reaction. The polypeptide is tRNA N6-adenosine threonylcarbamoyltransferase (Rhizobium johnstonii (strain DSM 114642 / LMG 32736 / 3841) (Rhizobium leguminosarum bv. viciae)).